The following is a 55-amino-acid chain: MKKELFDLNLNKDIEAQKSDLNPQSASIVKTTIKASKKLCRGFTLTCGCHFTGKK.

Residues 1–24 constitute a propeptide, cleaved by ElxP; sequence MKKELFDLNLNKDIEAQKSDLNPQ. At Ser-25 the chain carries D-lactate; by the dehydratase ElxB and the dehydrogenase ElxO. Position 27 is a 2,3-didehydroalanine (Ser); by the dehydratase ElxB (Ser-27). A 2,3-didehydrobutyrine; by the dehydratase ElxB mark is found at Thr-31 and Thr-32. A cross-link (lanthionine (Ser-Cys); by the dehydratase ElxB and the cyclase ElxC) is located at residues 36–40; sequence SKKLC. Cross-links (beta-methyllanthionine (Thr-Cys); by the dehydratase ElxB and the cyclase ElxC) lie at residues 44 to 47 and 46 to 49; these read TLTC and TCGC. At Thr-52 the chain carries 2,3-didehydrobutyrine; by the dehydratase ElxB.

Maturation of this lantibiotic involves the enzymatic conversion of Thr, and Ser into dehydrated AA by ElxB and the formation of thioether bonds with cysteine by the cyclase ElxC. The next steps are cleavage of the leader peptide by ElxP and membrane translocation by ElxT. The leader peptide may be removed before membrane translocation, in contrast to other lantibiotics for which the cleavage occur after translocation. This is suggested by the probable cytoplasmic localization of the serine protease ElxP that cleaves the leader peptide. Post-translationally, the N-terminal D-lactate is probably produced by dehydration of Ser-25 by ElxB, followed by proteolytic removal of the leader peptide by the serine protease ElxP and hydrolysis of the resulting new N-terminal dehydroalanine. This hydrolysis may occur spontaneously. The pyruvate group thus formed is reduced to D-lactate by the NADPH-dependent oxidoreductase ElxO. This N-terminal D-lactate protects the lantibiotic against degradation against aminopeptidase. In terms of processing, it is not established whether the 2,3-didehydrobutyrines are the E- or Z-isomers.

Functionally, lanthionine-containing peptide antibiotic (lantibiotic) active on Gram-positive bacteria such as staphylococci, enterococci and streptococci. The bactericidal activity of lantibiotics is based on depolarization of energized bacterial cytoplasmic membranes, initiated by the formation of aqueous transmembrane pores. The chain is Lantibiotic epilancin 15X from Staphylococcus epidermidis.